Here is a 568-residue protein sequence, read N- to C-terminus: MASIIQALPTEVVYLITAGEVIDSLASVVRELVENSLDAGATRIVVSLWPQQWRIRVADNGCGMNLDDLQQAATAHSTSKIRSSADLWKINSLGFRGEALHSLTTLADLEILSRPVDGKLGWRISYGNGGKVVQVEVTAIAPGTVVTVSNLFGNCSSRRQGLPTTAQQMKAVQATIYQIALCHPHVTWQIWQNDRQWFTISPARTTGQLLPQILPQVRQGDLQEVKLEIPNPPHSPLPCTNAIHRVSPHSALTLVVGLPDRCHRHRPDWVRVAINGRMVKTPELEQTILSAFHRTLPRDRYPICFLHLAISPDQINWNRNPAKTEIYLNEIIYWQEQITQAINQALSISSSNLKEAVHTTRVSKLLKAAEAKGGYNFNPQNPKEDRKNPNSLKAVAQVSNTYIVAEHPGGMWLVEQHIAHERVLYEQLCDDWQLVPVEPPIILYQLSLAQVSQLQRIGLDIESFGEQLWAVRNIPAPLQQRDDCAEAILELSWGGDLQTAQVAVACRSAIRNGTPMNQQEMQTLLDNWQRTRNPRTCPHGRPIYLSLEESALARFFRRNWVIGKSHGI.

This sequence belongs to the DNA mismatch repair MutL/HexB family.

In terms of biological role, this protein is involved in the repair of mismatches in DNA. It is required for dam-dependent methyl-directed DNA mismatch repair. May act as a 'molecular matchmaker', a protein that promotes the formation of a stable complex between two or more DNA-binding proteins in an ATP-dependent manner without itself being part of a final effector complex. The chain is DNA mismatch repair protein MutL from Nostoc punctiforme (strain ATCC 29133 / PCC 73102).